The primary structure comprises 171 residues: Calcium channel flower homolog (171 aa).

Topologically, residues 1–31 (MSGSVAAGAAAGPVPPAQEEGMTWWYRWLCR) are cytoplasmic. Residues 32–52 (LAGVLGAVSCAISGLFNCVTI) form a helical membrane-spanning segment. Topologically, residues 53–56 (HPLN) are extracellular. The chain crosses the membrane as a helical span at residues 57–77 (IAAGVWMIMNAFILLLCEAPF). Residues 78–101 (CCQFVEFANTVAEKVDRLRSWQKA) are Cytoplasmic-facing. The helical transmembrane segment at 102-122 (VFYCGMAIVPIVMSLTLTTLL) threads the bilayer. The Extracellular portion of the chain corresponds to 123–124 (GN). Residues 125–141 (AIAFATGVLYGLSALGK) form a helical membrane-spanning segment. Topologically, residues 142–171 (KGDAISYARIQQQRQQADEEKLAETFEGEL) are cytoplasmic.

The protein belongs to the calcium channel flower family. As to quaternary structure, interacts with adaptor protein complex 2 (AP-2). As to expression, expressed in calyces in the brain (at protein level). Detected in cultured hippocampal neurons (at protein level).

It localises to the cell membrane. It is found in the cytoplasmic vesicle. The protein resides in the secretory vesicle. Its subcellular location is the synaptic vesicle. The protein localises to the golgi apparatus. It localises to the vesicle. In terms of biological role, transmembrane protein which mediates synaptic endocytosis and fitness-based cell culling. In response to different stimulus strengths, controls two major modes of synaptic vesicle (SV) retrieval in hippocampal neurons; Clathrin-mediated endocytosis (CME) in response to mild stimulation and activity-dependent bulk endocytosis (ADBE) in response to strong stimulation. In cytotoxic T-lymphoocytes (CTLs) facilitates calcium-dependent endocytosis of cytotoxic granules (CGs) at the immuno synapse. Different isoforms work as fitness fingerprints in 'loser' and 'winner' cells and thereby mediate win/lose decisions as part of the cell competition process. The protein is Calcium channel flower homolog (Cacfd1) of Rattus norvegicus (Rat).